The sequence spans 264 residues: GTP cyclohydrolase FolE2 (264 aa).

Belongs to the GTP cyclohydrolase IV family.

It catalyses the reaction GTP + H2O = 7,8-dihydroneopterin 3'-triphosphate + formate + H(+). The protein operates within cofactor biosynthesis; 7,8-dihydroneopterin triphosphate biosynthesis; 7,8-dihydroneopterin triphosphate from GTP: step 1/1. Its function is as follows. Converts GTP to 7,8-dihydroneopterin triphosphate. The protein is GTP cyclohydrolase FolE2 of Vesicomyosocius okutanii subsp. Calyptogena okutanii (strain HA).